Reading from the N-terminus, the 65-residue chain is Alpha-conotoxin BnIA (65 aa).

The signal sequence occupies residues Met-1 to Ser-21. The propeptide occupies Phe-22–Lys-48. 2 disulfides stabilise this stretch: Cys-50–Cys-56 and Cys-51–Cys-64. The tract at residues Ser-52–Pro-54 is ser-Xaa-Pro motif, crucial for potent interaction with nAChR. Cys-64 is subject to Cysteine amide.

The protein belongs to the conotoxin A superfamily. Expressed by the venom duct.

It localises to the secreted. In terms of biological role, alpha-conotoxins act on postsynaptic membranes, they bind to the nicotinic acetylcholine receptors (nAChR) and thus inhibit them. This toxin inhibits acetylcholine-evoked currents reversibly in oocytes expressing the human alpha-7/CHRNA7 nAChR, and blocks nerve-evoked skeletal muscle contractions in isolated mouse neuromuscular preparations, but with a very low affinity. This chain is Alpha-conotoxin BnIA, found in Conus bandanus (Banded marble cone).